Here is a 209-residue protein sequence, read N- to C-terminus: Glutathione S-transferase 1, isoform D (209 aa).

Positions 1-80 (MDFYYLPGSA…YLAEKYGKDD (80 aa)) constitute a GST N-terminal domain. Residues Ser9, 50–52 (HCI), and 64–66 (ESR) each bind glutathione. In terms of domain architecture, GST C-terminal spans 86-207 (DPQKRAVVNQ…AGADEFKAKF (122 aa)).

This sequence belongs to the GST superfamily. Theta family. In terms of assembly, homodimer.

It carries out the reaction RX + glutathione = an S-substituted glutathione + a halide anion + H(+). The enzyme catalyses 1,1,1-trichloro-2,2-bis(4-chlorophenyl)ethane = 1,1-dichloro-2,2-bis(4-chlorophenyl)ethylene + chloride + H(+). With respect to regulation, inhibited by S-hexylglutathione. In terms of biological role, conjugation of reduced glutathione to a wide number of exogenous and endogenous hydrophobic electrophiles. Has DDT dehydrochlorinase activity. The polypeptide is Glutathione S-transferase 1, isoform D (GstD1) (Anopheles gambiae (African malaria mosquito)).